A 322-amino-acid polypeptide reads, in one-letter code: Eukaryotic translation initiation factor 3 subunit I (322 aa).

WD repeat units follow at residues 4–43, 46–85, 141–180, 184–223, and 281–322; these read GHERSITQIKYNREGDLLFSSSKDQKPNVWYSLNGERLGT, GHQGAVWCLDVDWESRKLITGAGDMTTKIWDVEYGTVIAS, MVESKITSMLWGPLDETIITGHDNGNIAIWDIRKGQKVVD, DHTAGINDMQLSKDGTMFVTASRDTTAKLFDSESLMCLKT, and GHFG…NIFE.

The protein belongs to the eIF-3 subunit I family. As to quaternary structure, component of the eukaryotic translation initiation factor 3 (eIF-3) complex. The eIF-3 complex interacts with pix.

Its subcellular location is the cytoplasm. Component of the eukaryotic translation initiation factor 3 (eIF-3) complex, which is involved in protein synthesis of a specialized repertoire of mRNAs and, together with other initiation factors, stimulates binding of mRNA and methionyl-tRNAi to the 40S ribosome. The eIF-3 complex specifically targets and initiates translation of a subset of mRNAs involved in cell proliferation. This is Eukaryotic translation initiation factor 3 subunit I from Drosophila virilis (Fruit fly).